Here is a 194-residue protein sequence, read N- to C-terminus: Phosphoheptose isomerase (194 aa).

The 158-residue stretch at 37 to 194 (ISNSFKQGGK…LIEFEMAKQA (158 aa)) folds into the SIS domain. 52-54 (NGG) contributes to the substrate binding site. His61 and Glu65 together coordinate Zn(2+). Substrate contacts are provided by residues Glu65, 93 to 94 (ND), 119 to 121 (STS), Ser124, and Gln172. Positions 172 and 180 each coordinate Zn(2+).

It belongs to the SIS family. GmhA subfamily. As to quaternary structure, homotetramer. The cofactor is Zn(2+).

It localises to the cytoplasm. It catalyses the reaction 2 D-sedoheptulose 7-phosphate = D-glycero-alpha-D-manno-heptose 7-phosphate + D-glycero-beta-D-manno-heptose 7-phosphate. It functions in the pathway carbohydrate biosynthesis; D-glycero-D-manno-heptose 7-phosphate biosynthesis; D-glycero-alpha-D-manno-heptose 7-phosphate and D-glycero-beta-D-manno-heptose 7-phosphate from sedoheptulose 7-phosphate: step 1/1. Its pathway is bacterial outer membrane biogenesis; LOS core biosynthesis. Its function is as follows. Catalyzes the isomerization of sedoheptulose 7-phosphate in D-glycero-D-manno-heptose 7-phosphate. This Haemophilus influenzae (strain ATCC 51907 / DSM 11121 / KW20 / Rd) protein is Phosphoheptose isomerase.